The following is a 125-amino-acid chain: MAISKEEVLEYIGSLSVLELSELVKMFEEKFGVSATPTVVAGAAVAGGAAAESEEKTEFNVILADSGAEKIKVIKVVREITGLGLKEAKDATEKTPHVLKEGVNKEEAETIKKKLEEVGAKVEVK.

This sequence belongs to the bacterial ribosomal protein bL12 family. As to quaternary structure, homodimer. Part of the ribosomal stalk of the 50S ribosomal subunit. Forms a multimeric L10(L12)X complex, where L10 forms an elongated spine to which 2 to 4 L12 dimers bind in a sequential fashion. Binds GTP-bound translation factors.

Functionally, forms part of the ribosomal stalk which helps the ribosome interact with GTP-bound translation factors. Is thus essential for accurate translation. This chain is Large ribosomal subunit protein bL12, found in Helicobacter pylori (strain HPAG1).